The sequence spans 530 residues: Na(+)/H(+) antiporter NhaB (530 aa).

12 helical membrane-spanning segments follow: residues 13-33 (FLGK…VINP), 34-54 (LVFF…EFIF), 90-110 (LVAN…IYFM), 121-141 (ILIG…TAAF), 145-165 (FLDA…FYAI), 205-225 (LLIH…VGEP), 241-261 (FIIR…LTCI), 306-326 (GLIA…VGLI), 327-347 (GLSV…HSMG), 351-371 (EEAL…AVII), 455-475 (GQAA…QLSY), and 481-501 (MALP…IFFL).

It belongs to the NhaB Na(+)/H(+) (TC 2.A.34) antiporter family.

The protein resides in the cell inner membrane. It catalyses the reaction 2 Na(+)(in) + 3 H(+)(out) = 2 Na(+)(out) + 3 H(+)(in). Functionally, na(+)/H(+) antiporter that extrudes sodium in exchange for external protons. This Aliivibrio fischeri (strain MJ11) (Vibrio fischeri) protein is Na(+)/H(+) antiporter NhaB.